The sequence spans 272 residues: Alpha-tubulin N-acetyltransferase (272 aa).

The N-acetyltransferase domain occupies 1–186; it reads MEFRFNCHPL…NNFVVYEGFF (186 aa). Residues 120 to 133 and 156 to 165 each bind acetyl-CoA; these read FYVH…GLGR and SEKLLGFLQK. Residues 216–244 form a disordered region; sequence TTVGEQRRSSSQTRQQVVSPPVVQQPPVG. Low complexity predominate over residues 224–244; it reads SSSQTRQQVVSPPVVQQPPVG.

The protein belongs to the acetyltransferase ATAT1 family.

The enzyme catalyses L-lysyl-[alpha-tubulin] + acetyl-CoA = N(6)-acetyl-L-lysyl-[alpha-tubulin] + CoA + H(+). Its function is as follows. Specifically acetylates 'Lys-40' in alpha-tubulin on the lumenal side of microtubules. Promotes microtubule destabilization and accelerates microtubule dynamics; this activity may be independent of acetylation activity. Acetylates alpha-tubulin with a slow enzymatic rate, due to a catalytic site that is not optimized for acetyl transfer. Enters the microtubule through each end and diffuses quickly throughout the lumen of microtubules. Acetylates only long/old microtubules because of its slow acetylation rate since it does not have time to act on dynamically unstable microtubules before the enzyme is released. This chain is Alpha-tubulin N-acetyltransferase, found in Aedes aegypti (Yellowfever mosquito).